The chain runs to 368 residues: Mitogen-activated protein kinase KSS1 (368 aa).

Residues 13–313 form the Protein kinase domain; the sequence is YKLVDLIGEG…AAEALRHPYL (301 aa). ATP-binding positions include 19-27 and Lys-42; that span reads IGEGAYGTV. The active-site Proton acceptor is Asp-143. A Phosphothreonine modification is found at Thr-183. The TXY signature appears at 183-185; it reads TEY. Tyr-185 is subject to Phosphotyrosine.

This sequence belongs to the protein kinase superfamily. Ser/Thr protein kinase family. MAP kinase subfamily. HOG1 sub-subfamily. As to quaternary structure, in the nucleus, KSS1 forms a complex with DIG1, DIG2 and STE12; in contrast to FUS3 the interaction of KSS1 with STE12 does not depend on DIG1 and DIG2. Phosphorylated KSS1 shows reduced interaction with STE12. During pheromone activation and phosphorylation, KSS1 forms a membrane-associated complex with the scaffold protein STE5, the MAPKK STE7, the MAPKKK STE11, and the G-protein beta subunit GBB/STE4; interacting directly with POF1, STE7 and STE5 proteins. Requires Mg(2+) as cofactor. In terms of processing, dually phosphorylated on Thr-183 and Tyr-185 by STE7 in response to pheromone or carbon/nitrogen limitation, which activates the enzyme. Activated FUS3 down-regulates KSS1 phosphorylation.

The protein resides in the nucleus. It is found in the cytoplasm. It localises to the periplasm. It carries out the reaction L-seryl-[protein] + ATP = O-phospho-L-seryl-[protein] + ADP + H(+). It catalyses the reaction L-threonyl-[protein] + ATP = O-phospho-L-threonyl-[protein] + ADP + H(+). Its activity is regulated as follows. Activated by tyrosine and threonine phosphorylation after pheromone treatment or carbon/nitrogen limitation. Together with closely related FUS3, KSS1 is the final kinase in the signal transduction cascade regulating activation/repression of the mating and filamentation pathways, induced by pheromone and nitrogen/carbon limitation, respectively. Phosphorylated KSS1 activates both pathways, whereas activated FUS3 activates the mating but suppresses the filamentation pathway. KSS1 activity is down-regulated by FUS3 during pheromone induction to prevent inappropriate activation of the filamentation pathway. During induction of filamentation, KSS1 activates the transcription factor STE12 resulting in its binding to and activation of filamentation specific genes. Non-activated KSS1 has a kinase-independent repressive effect on STE12 transcriptional activity, that is mediated by direct binding to STE12 and depends on the presence of DIG1 and DIG2, and that is required for the suppression of filamentation under normal growth conditions. SSN3/SRB10 contributes further to the suppression of filamentation under these conditions by reducing STE12 stability independent of KSS1. FUS3 can partially compensate for the lack of KSS1 but filamentation becomes constitutively induced at a low level in the absence of any signal. KSS1 phosphorylates STE7, STE5, FAR1, DIG1, DIG2, STE12, and SST2. This chain is Mitogen-activated protein kinase KSS1 (KSS1), found in Saccharomyces cerevisiae (strain ATCC 204508 / S288c) (Baker's yeast).